Here is a 27-residue protein sequence, read N- to C-terminus: MENEHQYSGARCSGQAAYVAKRQECAK.

Its function is as follows. A short protein whose stop codon overlaps with the start codon of downstream iraD; its mRNA secondary structure is predicted to fold and sequester the Shine-Dalgarno sequence of iraD. When this protein is expressed the downstream iraD is also expressed due to ribosomal coupling. The sequence is that of iraD leader peptide (idlP) from Escherichia coli (strain K12).